We begin with the raw amino-acid sequence, 235 residues long: Orotidine 5'-phosphate decarboxylase (235 aa).

Residues D9, K31, 58–67 (DLKFHDIPNT), T121, R180, Q190, G210, and R211 contribute to the substrate site. K60 serves as the catalytic Proton donor.

Belongs to the OMP decarboxylase family. Type 1 subfamily. In terms of assembly, homodimer.

The catalysed reaction is orotidine 5'-phosphate + H(+) = UMP + CO2. The protein operates within pyrimidine metabolism; UMP biosynthesis via de novo pathway; UMP from orotate: step 2/2. Its function is as follows. Catalyzes the decarboxylation of orotidine 5'-monophosphate (OMP) to uridine 5'-monophosphate (UMP). This Nitratidesulfovibrio vulgaris (strain ATCC 29579 / DSM 644 / CCUG 34227 / NCIMB 8303 / VKM B-1760 / Hildenborough) (Desulfovibrio vulgaris) protein is Orotidine 5'-phosphate decarboxylase.